Here is a 393-residue protein sequence, read N- to C-terminus: Tryptophan synthase beta chain (393 aa).

K85 carries the N6-(pyridoxal phosphate)lysine modification.

Belongs to the TrpB family. As to quaternary structure, tetramer of two alpha and two beta chains. Pyridoxal 5'-phosphate serves as cofactor.

The catalysed reaction is (1S,2R)-1-C-(indol-3-yl)glycerol 3-phosphate + L-serine = D-glyceraldehyde 3-phosphate + L-tryptophan + H2O. The protein operates within amino-acid biosynthesis; L-tryptophan biosynthesis; L-tryptophan from chorismate: step 5/5. Functionally, the beta subunit is responsible for the synthesis of L-tryptophan from indole and L-serine. This chain is Tryptophan synthase beta chain (trpB), found in Helicobacter pylori (strain J99 / ATCC 700824) (Campylobacter pylori J99).